A 216-amino-acid chain; its full sequence is Imidazole glycerol phosphate synthase subunit HisH (216 aa).

Residues 2 to 216 (RVAIIDYGSG…FIANFLKWKP (215 aa)) form the Glutamine amidotransferase type-1 domain. C88 (nucleophile) is an active-site residue. Residues H196 and E198 contribute to the active site.

As to quaternary structure, heterodimer of HisH and HisF.

Its subcellular location is the cytoplasm. The enzyme catalyses 5-[(5-phospho-1-deoxy-D-ribulos-1-ylimino)methylamino]-1-(5-phospho-beta-D-ribosyl)imidazole-4-carboxamide + L-glutamine = D-erythro-1-(imidazol-4-yl)glycerol 3-phosphate + 5-amino-1-(5-phospho-beta-D-ribosyl)imidazole-4-carboxamide + L-glutamate + H(+). It catalyses the reaction L-glutamine + H2O = L-glutamate + NH4(+). It functions in the pathway amino-acid biosynthesis; L-histidine biosynthesis; L-histidine from 5-phospho-alpha-D-ribose 1-diphosphate: step 5/9. IGPS catalyzes the conversion of PRFAR and glutamine to IGP, AICAR and glutamate. The HisH subunit catalyzes the hydrolysis of glutamine to glutamate and ammonia as part of the synthesis of IGP and AICAR. The resulting ammonia molecule is channeled to the active site of HisF. This chain is Imidazole glycerol phosphate synthase subunit HisH, found in Brucella melitensis biotype 1 (strain ATCC 23456 / CCUG 17765 / NCTC 10094 / 16M).